The sequence spans 1357 residues: DNA-directed RNA polymerase subunit beta (1357 aa).

The protein belongs to the RNA polymerase beta chain family. The RNAP catalytic core consists of 2 alpha, 1 beta, 1 beta' and 1 omega subunit. When a sigma factor is associated with the core the holoenzyme is formed, which can initiate transcription.

It catalyses the reaction RNA(n) + a ribonucleoside 5'-triphosphate = RNA(n+1) + diphosphate. In terms of biological role, DNA-dependent RNA polymerase catalyzes the transcription of DNA into RNA using the four ribonucleoside triphosphates as substrates. The chain is DNA-directed RNA polymerase subunit beta from Neorickettsia sennetsu (Ehrlichia sennetsu).